Reading from the N-terminus, the 462-residue chain is MEKAIERQRVLLEHLRPSSSSSHNYEASLSASACLAGDSAAYQRTSLYGDDVVIVAAHRTPLCKSKRGNFKDTYPDDLLAPVLRALIEKTNLNPSEVGDIVVGTVLAPGSQRASECRMAAFYAGFPETVAVRTVNRQCSSGLQAVADVAAAIKAGFYDIGIGAGLESMTTNPMAWEGSVNPAVKKFAQAQNCLLPMGVTSENVAQRFGVSRQEQDQAAVDSHRKAAAATAAGKFKDEIIPVKTKLVDPKTGDEKPITVSVDDGIRPTTTLASLGKLKPVFKKDGTTTAGNSSQVSDGAGAVLLMKRSVAMQKGLPVLGVFRTFAAVGVDPAIMGIGPAVAIPAAVKAAGLELDDIDLFEINEAFASQFVYCRNKLGLDPEKINVNGGAMAIGHPLGATGARCVATLLHEMKRRGKDCRFGVVSMCIGTGMGAAAVFERGDGVDELRNARKVEAQGLLSKDAR.

Residues 1-34 (MEKAIERQRVLLEHLRPSSSSSHNYEASLSASAC) constitute a peroxisome transit peptide. C138 (acyl-thioester intermediate) is an active-site residue. A disulfide bridge connects residues C138 and C192. Catalysis depends on proton acceptor residues H393 and C425.

It belongs to the thiolase-like superfamily. Thiolase family. As to quaternary structure, forms homodimers. Accumulates in etiolated cotyledons and in seedlings, also present in roots, flowers and siliques (at protein level). High levels in wounded leaves.

The protein resides in the peroxisome. The protein localises to the glyoxysome. It catalyses the reaction an acyl-CoA + acetyl-CoA = a 3-oxoacyl-CoA + CoA. Its pathway is lipid metabolism; fatty acid metabolism. Involved in long chain fatty-acid beta-oxidation prior to gluconeogenesis during germination and subsequent seedling growth. Confers sensitivity to 2,4-dichlorophenoxybutiric acid (2,4-DB). Required for local and systemic induction of jasmonic acid (JA) biosynthesis after wounding. Seems to be involved in JA biosynthesis during senescence. May be involved in the positive regulation of abscisic acid-activated signaling pathway. The protein is 3-ketoacyl-CoA thiolase 2, peroxisomal (PED1) of Arabidopsis thaliana (Mouse-ear cress).